The sequence spans 451 residues: G-protein coupled receptor 61 (451 aa).

Low complexity predominate over residues 1-14; that stretch reads MESSPIPQSSGNSS. The tract at residues 1–31 is disordered; that stretch reads MESSPIPQSSGNSSTLGRVPQTPGPSTASGV. Over 1–44 the chain is Extracellular; the sequence is MESSPIPQSSGNSSTLGRVPQTPGPSTASGVPEVGLRDVASESV. Asn-12 carries an N-linked (GlcNAc...) asparagine glycan. A helical membrane pass occupies residues 45–67; sequence ALFFMLLLDLTAVAGNAAVMAVI. Residues 68-75 are Cytoplasmic-facing; that stretch reads AKTPALRK. A helical transmembrane segment spans residues 76–98; sequence FVFVFHLCLVDLLAALTLMPLAM. At 99–112 the chain is on the extracellular side; sequence LSSSALFDHALFGE. The helical transmembrane segment at 113 to 135 threads the bilayer; the sequence is VACRLYLFLSVCFVSLAILSVSA. Over 136 to 155 the chain is Cytoplasmic; sequence INVERYYYVVHPMRYEVRMT. The helical transmembrane segment at 156–178 threads the bilayer; that stretch reads LGLVASVLVGVWVKALAMASVPV. Over 179 to 206 the chain is Extracellular; the sequence is LGRVSWEEGAPSVPPGCSLQWSHSAYCQ. A helical transmembrane segment spans residues 207–229; sequence LFVVVFAVLYFLLPLLLILVVYC. The Cytoplasmic portion of the chain corresponds to 230–287; it reads SMFRVARVAAMQHGPLPTWMETPRQRSESLSSRSTMVTSSGAPQTTPHRTFGGGKAAV. Residues 288–310 traverse the membrane as a helical segment; the sequence is VLLAVGGQFLLCWLPYFSFHLYV. The Extracellular portion of the chain corresponds to 311–324; it reads ALSAQPISTGQVES. The helical transmembrane segment at 325–344 threads the bilayer; sequence VVTWIGYFCFTSNPFFYGCL. Over 345-451 the chain is Cytoplasmic; that stretch reads NRQIRGELSK…RPAASPRLES (107 aa).

It belongs to the G-protein coupled receptor 1 family. As to quaternary structure, forms heterodimer with MTNR1B. Interacts with ARRB1 and ARRB2 in a spontaneous and agonist-independent manner; leading to the internalization of GPR61 in the endosomal compartment. As to expression, expressed in brain; detected in frontal and temporal lobes, occipital pole, amygdala and hippocampus. Also expressed in testis and T cells, B cells, and monocyte. Low expression in many other tissues. Widely expressed in the hippocampus (at protein level).

Its subcellular location is the cell membrane. It is found in the endosome membrane. In terms of biological role, orphan G-protein coupled receptor. Constitutively activates the G(s)-alpha/cAMP signaling pathway. Shows a reciprocal regulatory interaction with the melatonin receptor MTNR1B most likely through receptor heteromerization. May be involved in the regulation of food intake and body weight. The protein is G-protein coupled receptor 61 (GPR61) of Homo sapiens (Human).